The sequence spans 147 residues: Large ribosomal subunit protein uL13 (147 aa).

The protein belongs to the universal ribosomal protein uL13 family. In terms of assembly, part of the 50S ribosomal subunit.

Functionally, this protein is one of the early assembly proteins of the 50S ribosomal subunit, although it is not seen to bind rRNA by itself. It is important during the early stages of 50S assembly. The chain is Large ribosomal subunit protein uL13 from Ligilactobacillus salivarius (strain UCC118) (Lactobacillus salivarius).